The chain runs to 492 residues: N-succinylglutamate 5-semialdehyde dehydrogenase (492 aa).

NAD(+) is bound at residue 220–225 (GSASTG). Catalysis depends on residues Glu-243 and Cys-277.

Belongs to the aldehyde dehydrogenase family. AstD subfamily.

It carries out the reaction N-succinyl-L-glutamate 5-semialdehyde + NAD(+) + H2O = N-succinyl-L-glutamate + NADH + 2 H(+). Its pathway is amino-acid degradation; L-arginine degradation via AST pathway; L-glutamate and succinate from L-arginine: step 4/5. In terms of biological role, catalyzes the NAD-dependent reduction of succinylglutamate semialdehyde into succinylglutamate. In Salmonella schwarzengrund (strain CVM19633), this protein is N-succinylglutamate 5-semialdehyde dehydrogenase.